The primary structure comprises 409 residues: Arginine deiminase (409 aa).

Cys-398 (amidino-cysteine intermediate) is an active-site residue.

It belongs to the arginine deiminase family.

Its subcellular location is the cytoplasm. The enzyme catalyses L-arginine + H2O = L-citrulline + NH4(+). Its pathway is amino-acid degradation; L-arginine degradation via ADI pathway; carbamoyl phosphate from L-arginine: step 1/2. This chain is Arginine deiminase, found in Metamycoplasma arthritidis (strain 158L3-1) (Mycoplasma arthritidis).